Here is a 1034-residue protein sequence, read N- to C-terminus: Potassium-transporting ATPase alpha chain 1 (1034 aa).

Topologically, residues 1 to 97 are cytoplasmic; sequence MGKAENYEMY…NALRPPRGTP (97 aa). 2 positions are modified to phosphotyrosine: Y7 and Y10. The tract at residues 14–41 is disordered; it reads LGPGPGGDMAAKMSKKKAGKGGGKKKEK. Positions 26 to 39 are enriched in basic residues; it reads MSKKKAGKGGGKKK. The residue at position 27 (S27) is a Phosphoserine. Residues 98–118 traverse the membrane as a helical segment; sequence EYVKFARQLAGGLQCLMWVAA. Residues 119-141 are Lumenal-facing; it reads AICLIAFAIQASEGDLTTDDNLY. A helical membrane pass occupies residues 142–162; the sequence is LALALIAVVVVTGCFGYYQEF. Over 163-298 the chain is Cytoplasmic; the sequence is KSTNIIASFK…NEKTPIAIEI (136 aa). Polar residues predominate over residues 225–239; it reads NSSLTGESEPQTRSP. Residues 225 to 245 form a disordered region; the sequence is NSSLTGESEPQTRSPECTHES. A helical membrane pass occupies residues 299–318; it reads EHFVDIIAGLAILFGATFFV. The Lumenal portion of the chain corresponds to 319–330; it reads VAMCIGYTFLRA. A helical membrane pass occupies residues 331–348; the sequence is MVFFMAIVVAYVPEGLLA. Positions 339, 340, 342, and 344 each coordinate K(+). The Cytoplasmic segment spans residues 349-782; it reads TVTVCLSLTA…EQGRLIFDNL (434 aa). The 4-aspartylphosphate intermediate role is filled by D386. Mg(2+) contacts are provided by D386 and T388. Phosphoserine is present on residues S462 and S600. Mg(2+) is bound by residues D727 and D731. A helical transmembrane segment spans residues 783–802; it reads KKSIAYTLTKNIPELTPYLI. E796 lines the K(+) pocket. Topologically, residues 803-812 are lumenal; it reads YITVSVPLPL. Residues 813–833 traverse the membrane as a helical segment; that stretch reads GCITILFIELCTDIFPSVSLA. E821 contributes to the K(+) binding site. Residues 834–853 are Cytoplasmic-facing; that stretch reads YEKAESDIMHLRPRNPKRDR. S839 carries the post-translational modification Phosphoserine. The chain crosses the membrane as a helical span at residues 854 to 876; the sequence is LVNEPLAAYSYFQIGAIQSFAGF. The Lumenal segment spans residues 877–928; the sequence is TDYFTAMAQEGWFPLLCVGLRPYWENHHLQDLQDSYGQEWTFGQRLYQQYTC. The helical transmembrane segment at 929–948 threads the bilayer; sequence YTVFFISIEMCQIADVLIRK. The Cytoplasmic portion of the chain corresponds to 949-962; sequence TRRLSAFQQGFFRN. The residue at position 953 (S953) is a Phosphoserine; by PKA. The chain crosses the membrane as a helical span at residues 963 to 981; it reads RILVIAIVFQVCIGCFLCY. Residues 982–996 lie on the Lumenal side of the membrane; the sequence is CPGMPNIFNFMPIRY. A helical membrane pass occupies residues 997 to 1017; it reads QWWLVPMPFGLLIFVYDEIRK. Residues 1018–1034 lie on the Cytoplasmic side of the membrane; it reads LGVRCCPGSWWDQELYY.

The protein belongs to the cation transport ATPase (P-type) (TC 3.A.3) family. Type IIC subfamily. As to quaternary structure, the gastric H(+)/K(+) ATPase pump is composed of the catalytic alpha subunit ATP4A and the regulatory beta subunit ATP4B. Interacts (via the P-domain) with ATP4B (via N-terminus); this interaction stabilizes the lumenal-open E2 conformation state and prevents the reverse reaction of the transport cycle.

Its subcellular location is the apical cell membrane. The enzyme catalyses K(+)(out) + ATP + H2O + H(+)(in) = K(+)(in) + ADP + phosphate + 2 H(+)(out). In terms of biological role, the catalytic subunit of the gastric H(+)/K(+) ATPase pump which transports H(+) ions in exchange for K(+) ions across the apical membrane of parietal cells. Uses ATP as an energy source to pump H(+) ions to the gastric lumen while transporting K(+) ion from the lumen into the cell. Remarkably generates a million-fold proton gradient across the gastric parietal cell membrane, acidifying the gastric juice down to pH 1. Within a transport cycle, the transfer of a H(+) ion across the membrane is coupled to ATP hydrolysis and is associated with a transient phosphorylation that shifts the pump conformation from inward-facing (E1) to outward-facing state (E2). The release of the H(+) ion in the stomach lumen is followed by binding of K(+) ion converting the pump conformation back to the E1 state. The polypeptide is Potassium-transporting ATPase alpha chain 1 (ATP4A) (Canis lupus familiaris (Dog)).